A 465-amino-acid polypeptide reads, in one-letter code: Serine carboxypeptidase 24 (465 aa).

The first 24 residues, 1–24 (MARTHFIFLLLVALLSTTFPSSSS), serve as a signal peptide directing secretion. N-linked (GlcNAc...) asparagine glycans are attached at residues Asn-54, Asn-105, and Asn-139. 3 disulfides stabilise this stretch: Cys-88–Cys-349, Cys-249–Cys-260, and Cys-285–Cys-317. Residue Ser-181 is part of the active site. N-linked (GlcNAc...) asparagine glycosylation is found at Asn-250, Asn-293, and Asn-338. The propeptide at 287–316 (AAQQKKNTTGFFVRMKNTLLRRRLVSGYDP) is linker peptide. Residues Asp-386 and His-438 contribute to the active site.

Belongs to the peptidase S10 family. In terms of assembly, heterodimer. N-glycosylated. Expressed in shoots, leaves, cauline leaves, siliques and flowers. Expressed a low levels in roots and stems.

It localises to the secreted. The protein resides in the extracellular space. It carries out the reaction Preferential release of a C-terminal arginine or lysine residue.. With respect to regulation, completely inhibited by phenylmethylsulfonyl fluoride (PMSF) and partially by leupeptin. In terms of biological role, active serine carboxypeptidase with broad substrate preference, including basic and hydrophilic groups. Processes a protein involved in an early event in the brassinosteroid signaling pathway. In Arabidopsis thaliana (Mouse-ear cress), this protein is Serine carboxypeptidase 24 (SCPL24).